A 165-amino-acid polypeptide reads, in one-letter code: Phosphopantetheine adenylyltransferase (165 aa).

Threonine 9 contributes to the substrate binding site. ATP contacts are provided by residues 9 to 10 (TF) and histidine 17. Positions 41, 73, and 87 each coordinate substrate. Residues 88–90 (GLR), glutamate 98, and 123–129 (YMFISAT) contribute to the ATP site.

This sequence belongs to the bacterial CoaD family. Homohexamer. It depends on Mg(2+) as a cofactor.

It localises to the cytoplasm. The catalysed reaction is (R)-4'-phosphopantetheine + ATP + H(+) = 3'-dephospho-CoA + diphosphate. It participates in cofactor biosynthesis; coenzyme A biosynthesis; CoA from (R)-pantothenate: step 4/5. Reversibly transfers an adenylyl group from ATP to 4'-phosphopantetheine, yielding dephospho-CoA (dPCoA) and pyrophosphate. This chain is Phosphopantetheine adenylyltransferase, found in Nitrosospira multiformis (strain ATCC 25196 / NCIMB 11849 / C 71).